Consider the following 316-residue polypeptide: MLFILVLLTSFLSILYLTAPSIRKFFAGGVCTTNVQIPGKVVVITGANTGIGKETARELARRGARVYIACRDVLKGESAASEIRADTKNSQVLVRKLDLSDTKSIRAFAERFLAEEKKLHILINNAGVMMCPYSKTTDGFETHFGVNHLGHFLLTYLLLERLKESAPARVVNLSSIAHLIGKIRFHDLQGQKRYCSAFAYGHSKLANLLFTRELAKRLQGTGVTAYAVHPGVVLSEITRNSYLLCLLWRLFSPFFKSTSQGAQTSLHCALAEDLEPLSGKYFSDCKRMWVSSRARNKKTAERLWNVSCELLGIQWE.

Position 46 to 52 (46 to 52 (GANTGIG)) interacts with NADP(+). Ser175 lines the substrate pocket. The active-site Proton acceptor is the Tyr200.

This sequence belongs to the short-chain dehydrogenases/reductases (SDR) family. Expressed in the inner segments of the photoreceptor in retina.

The enzyme catalyses all-trans-retinol + NADP(+) = all-trans-retinal + NADPH + H(+). It catalyses the reaction 11-cis-retinol + NADP(+) = 11-cis-retinal + NADPH + H(+). It carries out the reaction 9-cis-retinol + NADP(+) = 9-cis-retinal + NADPH + H(+). The catalysed reaction is a 4-hydroxynonen-1-ol + NADP(+) = a 4-hydroxynonenal + NADPH + H(+). The enzyme catalyses (E)-non-2-en-1-ol + NADP(+) = (E)-non-2-enal + NADPH + H(+). It catalyses the reaction (Z)-non-6-en-1-ol + NADP(+) = (Z)-non-6-enal + NADPH + H(+). It carries out the reaction nonan-1-ol + NADP(+) = nonanal + NADPH + H(+). It participates in cofactor metabolism; retinol metabolism. In terms of biological role, retinoids dehydrogenase/reductase with a clear preference for NADP. Displays high activity towards 9-cis, 11-cis and all-trans-retinal. Shows very weak activity toward 13-cis-retinol. Also exhibits activity, albeit with lower affinity than for retinaldehydes, towards lipid peroxidation products (C9 aldehydes) such as 4-hydroxynonenal and trans-2-nonenal. Plays an important function in photoreceptor cells to detoxify 4-hydroxynonenal and potentially other toxic aldehyde products resulting from lipid peroxidation. Has no dehydrogenase activity towards steroids. This chain is Retinol dehydrogenase 12 (Rdh12), found in Mus musculus (Mouse).